The sequence spans 158 residues: MPSPVESFELDHCAVKAPYVRHCGVHKIGSDGVVNKFDIRFCQPNKEAMDPAAIHTLEHLLAYTLRKHVTKYDHFDIIDISPMGCQTGFYLVVSGSPTVDEIIDLLEETMKDALNATEVPAATERQCGQAKLHDLEAAKELMRFWLSQEKSELKKVFG.

The Fe cation site is built by His-55, His-59, and Cys-127.

This sequence belongs to the LuxS family. As to quaternary structure, homodimer. It depends on Fe cation as a cofactor.

The enzyme catalyses S-(5-deoxy-D-ribos-5-yl)-L-homocysteine = (S)-4,5-dihydroxypentane-2,3-dione + L-homocysteine. Involved in the synthesis of autoinducer 2 (AI-2) which is secreted by bacteria and is used to communicate both the cell density and the metabolic potential of the environment. The regulation of gene expression in response to changes in cell density is called quorum sensing. Catalyzes the transformation of S-ribosylhomocysteine (RHC) to homocysteine (HC) and 4,5-dihydroxy-2,3-pentadione (DPD). This chain is S-ribosylhomocysteine lyase, found in Geobacillus thermodenitrificans (strain NG80-2).